A 140-amino-acid polypeptide reads, in one-letter code: General stress protein 26 (140 aa).

The polypeptide is General stress protein 26 (ydaG) (Bacillus subtilis (strain 168)).